We begin with the raw amino-acid sequence, 395 residues long: Ribose-phosphate pyrophosphokinase 2, chloroplastic (395 aa).

Low complexity predominate over residues 1 to 23; that stretch reads MASPAPRSLSSSSSSSSSSFCPS. The interval 1-33 is disordered; that stretch reads MASPAPRSLSSSSSSSSSSFCPSISPPPRSPSR. Residues 1-42 constitute a chloroplast transit peptide; sequence MASPAPRSLSSSSSSSSSSFCPSISPPPRSPSRASLPFSVKC. Residues aspartate 209, histidine 211, aspartate 220, and aspartate 224 each contribute to the Mg(2+) site. A binding of phosphoribosylpyrophosphate region spans residues 295 to 310; that stretch reads GKVAVMLDDMIDTAGT.

Belongs to the ribose-phosphate pyrophosphokinase family.

The protein localises to the plastid. Its subcellular location is the chloroplast. The enzyme catalyses D-ribose 5-phosphate + ATP = 5-phospho-alpha-D-ribose 1-diphosphate + AMP + H(+). The sequence is that of Ribose-phosphate pyrophosphokinase 2, chloroplastic (PRS2) from Spinacia oleracea (Spinach).